A 609-amino-acid polypeptide reads, in one-letter code: UvrABC system protein C (609 aa).

The 79-residue stretch at 13–91 folds into the GIY-YIG domain; the sequence is HQPGVYRMFD…IKAFQPRYNV (79 aa). One can recognise a UVR domain in the interval 201-236; it reads QQVLEHLIKKMEQASMQLNFEQAAYFRDQIQAIRAV.

This sequence belongs to the UvrC family. Interacts with UvrB in an incision complex.

It is found in the cytoplasm. The UvrABC repair system catalyzes the recognition and processing of DNA lesions. UvrC both incises the 5' and 3' sides of the lesion. The N-terminal half is responsible for the 3' incision and the C-terminal half is responsible for the 5' incision. This Histophilus somni (strain 129Pt) (Haemophilus somnus) protein is UvrABC system protein C.